A 451-amino-acid chain; its full sequence is Alpha-galactosidase (451 aa).

5 to 71 (PKITFIGAGS…ASGKITCHTQ (67 aa)) is an NAD(+) binding site. Asn151 contacts substrate. Cys173 is a Mn(2+) binding site. The Proton donor role is filled by His174. Residue His203 coordinates Mn(2+). Arg287 provides a ligand contact to substrate.

Belongs to the glycosyl hydrolase 4 family. In terms of assembly, homodimer. The cofactor is NAD(+). Mn(2+) is required as a cofactor.

The enzyme catalyses Hydrolysis of terminal, non-reducing alpha-D-galactose residues in alpha-D-galactosides, including galactose oligosaccharides, galactomannans and galactolipids.. The sequence is that of Alpha-galactosidase (melA) from Escherichia coli (strain K12).